Reading from the N-terminus, the 438-residue chain is 26S proteasome regulatory subunit 6A (438 aa).

Positions 1–24 (MSTLEELDALDQSQQGGSSNNEGL) are disordered. Polar residues predominate over residues 11–22 (DQSQQGGSSNNE). 226–233 (GPPGTGKT) contacts ATP.

It belongs to the AAA ATPase family.

Its subcellular location is the cytoplasm. The protein resides in the nucleus. The 26S proteasome is involved in the ATP-dependent degradation of ubiquitinated proteins. The regulatory (or ATPase) complex confers ATP dependency and substrate specificity to the 26S complex. This Schizosaccharomyces pombe (strain 972 / ATCC 24843) (Fission yeast) protein is 26S proteasome regulatory subunit 6A (tbp1).